Here is a 270-residue protein sequence, read N- to C-terminus: Flagellar hook-basal body complex protein FlhO (270 aa).

The protein belongs to the flagella basal body rod proteins family.

Its function is as follows. Not required for motility. The sequence is that of Flagellar hook-basal body complex protein FlhO (flhO) from Bacillus subtilis (strain 168).